The primary structure comprises 114 residues: Ribosome-binding factor A (114 aa).

This sequence belongs to the RbfA family. Monomer. Binds 30S ribosomal subunits, but not 50S ribosomal subunits or 70S ribosomes.

The protein resides in the cytoplasm. One of several proteins that assist in the late maturation steps of the functional core of the 30S ribosomal subunit. Associates with free 30S ribosomal subunits (but not with 30S subunits that are part of 70S ribosomes or polysomes). Required for efficient processing of 16S rRNA. May interact with the 5'-terminal helix region of 16S rRNA. In Staphylococcus saprophyticus subsp. saprophyticus (strain ATCC 15305 / DSM 20229 / NCIMB 8711 / NCTC 7292 / S-41), this protein is Ribosome-binding factor A.